The sequence spans 632 residues: Extracellular metalloproteinase 2 (632 aa).

The N-terminal stretch at Met1–Gly19 is a signal peptide. A propeptide spanning residues Leu20–Ser244 is cleaved from the precursor. N-linked (GlcNAc...) asparagine glycosylation is present at Asn270. His429 is a Zn(2+) binding site. Glu430 is an active-site residue. A Zn(2+)-binding site is contributed by His433.

Belongs to the peptidase M36 family. It depends on Zn(2+) as a cofactor.

It is found in the secreted. In terms of biological role, secreted metalloproteinase that allows assimilation of proteinaceous substrates and probably acts as a virulence factor. The chain is Extracellular metalloproteinase 2 (MEP2) from Arthroderma gypseum (strain ATCC MYA-4604 / CBS 118893) (Microsporum gypseum).